A 681-amino-acid chain; its full sequence is Pescadillo homolog (681 aa).

In terms of domain architecture, BRCT spans 350 to 469; that stretch reads TAGALFAPFT…KLLRPDLYAP (120 aa). Residues 489 to 681 form a disordered region; the sequence is DPRASLAEQE…RRKLEKGAEK (193 aa). A coiled-coil region spans residues 491 to 527; the sequence is RASLAEQEEEGEAEIAAEEEEEDSDEEMEEATDGKKV. Over residues 496-521 the composition is skewed to acidic residues; that stretch reads EQEEEGEAEIAAEEEEEDSDEEMEEA. Residues 522 to 533 are compositionally biased toward basic and acidic residues; that stretch reads TDGKKVDAKAED. Composition is skewed to acidic residues over residues 534 to 546 and 554 to 586; these read SAEEENEDEDDSV and GTDDDEDESEEEMEDEFGGFEEEAASESEDEEE. A coiled-coil region spans residues 574-681; that stretch reads EEEAASESED…RRKLEKGAEK (108 aa). A compositionally biased stretch (basic and acidic residues) spans 587-597; that stretch reads SARTQHQKELE. A compositionally biased stretch (basic residues) spans 617 to 629; sequence KKSSQAKKVASKK. Residues 630–640 are compositionally biased toward basic and acidic residues; sequence RKEEEELERQK.

It belongs to the pescadillo family. In terms of assembly, component of the NOP7 complex, composed of erb1, nop7 and ytm1. The complex is held together by erb1, which interacts with nop7 via its N-terminal domain and with ytm1 via a high-affinity interaction between the seven-bladed beta-propeller domains of the 2 proteins. The NOP7 complex associates with the 66S pre-ribosome.

It is found in the nucleus. The protein resides in the nucleolus. The protein localises to the nucleoplasm. Component of the NOP7 complex, which is required for maturation of the 25S and 5.8S ribosomal RNAs and formation of the 60S ribosome. The protein is Pescadillo homolog (nop7) of Aspergillus oryzae (strain ATCC 42149 / RIB 40) (Yellow koji mold).